Reading from the N-terminus, the 227-residue chain is Cytochrome c oxidase subunit 2 (227 aa).

At 1–14 (MAYPFQLGLQDATS) the chain is on the mitochondrial intermembrane side. The helical transmembrane segment at 15 to 45 (PIMEELMNFHDHTLMIVFLISSLVLYIISLM) threads the bilayer. Topologically, residues 46–59 (LTTKLTHTSTMDAQ) are mitochondrial matrix. A helical transmembrane segment spans residues 60 to 87 (EVETIWTILPAAILILIALPSLRILYMM). The Mitochondrial intermembrane segment spans residues 88-227 (DEINNPALTV…YFENWSASMI (140 aa)). Positions 161, 196, 198, 200, 204, and 207 each coordinate Cu cation. Glu-198 contacts Mg(2+). At Tyr-218 the chain carries Phosphotyrosine.

This sequence belongs to the cytochrome c oxidase subunit 2 family. As to quaternary structure, component of the cytochrome c oxidase (complex IV, CIV), a multisubunit enzyme composed of 14 subunits. The complex is composed of a catalytic core of 3 subunits MT-CO1, MT-CO2 and MT-CO3, encoded in the mitochondrial DNA, and 11 supernumerary subunits COX4I, COX5A, COX5B, COX6A, COX6B, COX6C, COX7A, COX7B, COX7C, COX8 and NDUFA4, which are encoded in the nuclear genome. The complex exists as a monomer or a dimer and forms supercomplexes (SCs) in the inner mitochondrial membrane with NADH-ubiquinone oxidoreductase (complex I, CI) and ubiquinol-cytochrome c oxidoreductase (cytochrome b-c1 complex, complex III, CIII), resulting in different assemblies (supercomplex SCI(1)III(2)IV(1) and megacomplex MCI(2)III(2)IV(2)). Found in a complex with TMEM177, COA6, COX18, COX20, SCO1 and SCO2. Interacts with TMEM177 in a COX20-dependent manner. Interacts with COX20. Interacts with COX16. The cofactor is Cu cation.

It localises to the mitochondrion inner membrane. The catalysed reaction is 4 Fe(II)-[cytochrome c] + O2 + 8 H(+)(in) = 4 Fe(III)-[cytochrome c] + 2 H2O + 4 H(+)(out). Component of the cytochrome c oxidase, the last enzyme in the mitochondrial electron transport chain which drives oxidative phosphorylation. The respiratory chain contains 3 multisubunit complexes succinate dehydrogenase (complex II, CII), ubiquinol-cytochrome c oxidoreductase (cytochrome b-c1 complex, complex III, CIII) and cytochrome c oxidase (complex IV, CIV), that cooperate to transfer electrons derived from NADH and succinate to molecular oxygen, creating an electrochemical gradient over the inner membrane that drives transmembrane transport and the ATP synthase. Cytochrome c oxidase is the component of the respiratory chain that catalyzes the reduction of oxygen to water. Electrons originating from reduced cytochrome c in the intermembrane space (IMS) are transferred via the dinuclear copper A center (CU(A)) of subunit 2 and heme A of subunit 1 to the active site in subunit 1, a binuclear center (BNC) formed by heme A3 and copper B (CU(B)). The BNC reduces molecular oxygen to 2 water molecules using 4 electrons from cytochrome c in the IMS and 4 protons from the mitochondrial matrix. The chain is Cytochrome c oxidase subunit 2 (MT-CO2) from Lemniscomys barbarus (Barbary striped grass mouse).